The following is a 493-amino-acid chain: Cysteine--tRNA ligase (493 aa).

Cysteine 29 contacts Zn(2+). The short motif at 31–41 (PTVYDFAHIGN) is the 'HIGH' region element. Residues cysteine 227, histidine 252, and glutamate 256 each contribute to the Zn(2+) site. The 'KMSKS' region signature appears at 285–289 (KMSKS). ATP is bound at residue lysine 288.

It belongs to the class-I aminoacyl-tRNA synthetase family. In terms of assembly, monomer. Zn(2+) serves as cofactor.

The protein resides in the cytoplasm. It catalyses the reaction tRNA(Cys) + L-cysteine + ATP = L-cysteinyl-tRNA(Cys) + AMP + diphosphate. The chain is Cysteine--tRNA ligase from Rhodopseudomonas palustris (strain HaA2).